Reading from the N-terminus, the 87-residue chain is Small ribosomal subunit protein bS20 (87 aa).

The interval 1–22 is disordered; that stretch reads MANIKSQIKRNKTNEKARLRNQ.

This sequence belongs to the bacterial ribosomal protein bS20 family.

Functionally, binds directly to 16S ribosomal RNA. In Corynebacterium glutamicum (strain R), this protein is Small ribosomal subunit protein bS20.